We begin with the raw amino-acid sequence, 261 residues long: Protein OSB1, mitochondrial (261 aa).

The N-terminal 28 residues, 1 to 28, are a transit peptide targeting the mitochondrion; sequence MNTFFKLGSLIQRTASQISSSFPKSRFF. Residues 55–155 form the SSB domain; that stretch reads VNSVSLMGFV…VKVAEVNYVA (101 aa). A PDF region region spans residues 189–238; that stretch reads WQVFFSNPYDWWDNRRNKKNPKQPDFKHKDTGEALWLCSDLPDWITRRLE.

In terms of tissue distribution, expressed in root elongation zone and in gametophytic cells.

The protein resides in the mitochondrion. In terms of biological role, regulates mitochondrial DNA recombination. Represses homologous recombination, preventing mitochondrial genome instability and unbalanced transmission of alternative mtDNA configurations. Binds preferentially single-stranded DNA. Does not bind to RNA. This is Protein OSB1, mitochondrial (OSB1) from Arabidopsis thaliana (Mouse-ear cress).